The sequence spans 136 residues: Protein Tat (136 aa).

Positions 22 to 37 (CTNCYCKKCCFHCPVC) are cysteine-rich. Residues 38–48 (FTKKALGISYG) are core. Basic residues predominate over residues 48–57 (GRKRRGRKSA). The disordered stretch occupies residues 48-136 (GRKRRGRKSA…SGSSGSACKH (89 aa)). The short motif at 49–55 (RKRRGRK) is the Nuclear localization signal, and RNA-binding (TAR) element. Residues 58–73 (VHSTNNQDPVRQQSLP) show a composition bias toward polar residues. The span at 104–120 (SSVSSGRTSGTSSSGYT) shows a compositional bias: low complexity. Polar residues predominate over residues 123 to 136 (FKTSSGSSGSACKH).

The protein belongs to the lentiviruses Tat family. In terms of assembly, interacts with host CCNT1. Associates with the P-TEFb complex composed at least of Tat, P-TEFb (CDK9 and CCNT1), TAR RNA, RNA Pol II. Interacts with CCNT2; the resulting complex is unable to bind to TAR RNA.

Its subcellular location is the host nucleus. The protein resides in the host nucleolus. Transcriptional activator that increases RNA Pol II processivity, thereby increasing the level of full-length viral transcripts. Recognizes a hairpin structure at the 5'-LTR of the nascent viral mRNAs referred to as the transactivation responsive RNA element (TAR) and recruits the cyclin T1-CDK9 complex (P-TEFb complex) that will in turn hyperphosphorylate the RNA polymerase II to allow efficient elongation. The CDK9 component of P-TEFb and other Tat-activated kinases hyperphosphorylate the C-terminus of RNA Pol II that becomes stabilized and much more processive. Its function is as follows. Extracellular circulating Tat can be endocytosed by surrounding uninfected cells via the binding to several surface receptors. Endosomal low pH allows Tat to cross the endosome membrane to enter the cytosol and eventually further translocate into the nucleus, thereby inducing severe cell dysfunctions ranging from cell activation to cell death. Through. In Simian immunodeficiency virus (isolate TAN1) (SIV-cpz), this protein is Protein Tat.